The primary structure comprises 542 residues: MQLLVPIYKRHSNSNFKVSSCSSSPMCPVNGKLQLHDGRTAYHFQPAKFWQNDPNGPLYHNGLYHFFYQYNPHGPLWDTGKLSWGHSVSGDLVNWAFLGTAIDPTDPFDVNGCWSGSATVLLGGRPAFLYTGRDAGGVQVQNVSFAKNPLDPLLREWEKPSCNPIIAFPADVINNNFRDPTTAWLGRDGLWRMVVAAEVAGAGSALVYRSADFLRWERNAAPMHSSAAVPVLECPDFFPVAEHGIDGLDTSANGGGTGVKHVLKLSEFDTHQDFYMVGRNRRVQWLWVNEYDSKADDVAKGWAGVQAFPRKVWLDGDGKQLLQWPVDEIETLRTKRVGLQGTEVKAGGLHEIVGVASSQADVEVVFEIPNLEDEAESFDPDWLDPHKLCKDKGAASAHGGVGPFGLIVMASGDLQEQTAVFFRVFKHHGKYKVFMCTDLTRSSTKADVYKDAYGGFVDVDIQKDKSISLRTLIDHSMIESFGGGGRACITTRVYPEHAATSSSHLYVFNNGSGTVNVSKLEAWEMATATVNSADALDAITRS.

Substrate is bound by residues 50-53, Gln69, Trp77, and 114-115; these read WQND and WS. Residue Asp53 is part of the active site. Asn142 carries N-linked (GlcNAc...) asparagine glycosylation. Substrate is bound by residues 178–179 and Glu233; that span reads RD. An intrachain disulfide couples Cys389 to Cys436. Asn510 and Asn516 each carry an N-linked (GlcNAc...) asparagine glycan.

This sequence belongs to the glycosyl hydrolase 32 family. As to expression, expressed in roots and leaves.

It localises to the secreted. The protein resides in the extracellular space. It is found in the apoplast. The protein localises to the cell wall. It catalyses the reaction Hydrolysis of terminal non-reducing beta-D-fructofuranoside residues in beta-D-fructofuranosides.. In terms of biological role, may play a role in stress response. This Oryza sativa subsp. japonica (Rice) protein is Beta-fructofuranosidase, insoluble isoenzyme 5 (CIN5).